Here is a 578-residue protein sequence, read N- to C-terminus: Phenylalanine--tRNA ligase beta subunit (578 aa).

Residues 292-370 (FDTDEKSVSH…RAYGFDNLEP (79 aa)) enclose the B5 domain. Positions 348, 354, 357, and 358 each coordinate Mg(2+).

Belongs to the phenylalanyl-tRNA synthetase beta subunit family. Type 2 subfamily. In terms of assembly, tetramer of two alpha and two beta subunits. Requires Mg(2+) as cofactor.

The protein localises to the cytoplasm. It catalyses the reaction tRNA(Phe) + L-phenylalanine + ATP = L-phenylalanyl-tRNA(Phe) + AMP + diphosphate + H(+). In Halorubrum lacusprofundi (strain ATCC 49239 / DSM 5036 / JCM 8891 / ACAM 34), this protein is Phenylalanine--tRNA ligase beta subunit.